The primary structure comprises 38 residues: Exendin-1 (38 aa).

The O-linked (HexNAc...) serine; in Exendin-1 and Exendin-1b glycan is linked to serine 32.

The protein belongs to the glucagon family. In terms of processing, O-linked glycan consists of Hex-HexNAc saccharide. Post-translationally, glycosylation may be of interest for the biological stability of exendin-1 and exendin-1b. In terms of tissue distribution, expressed by the venom gland.

The protein resides in the secreted. Functionally, O-linked and free exendin-1 and exendin-1b have vasoactive intestinal peptide(VIP)/secretin-like biological activities. They interact with rat and human VIP receptors 1 (VIPR1) and 2 (VIPR2), with the highest affinity for the human VIPR2. They induce hypotension that is mediated by relaxation of cardiac smooth muscle. The polypeptide is Exendin-1 (Heloderma horridum horridum (Mexican beaded lizard)).